A 542-amino-acid polypeptide reads, in one-letter code: Doublesex- and mab-3-related transcription factor A2 (542 aa).

The DM DNA-binding region spans 70–117; that stretch reads CARCRNHGVVSALKGHKRYCRWKDCLCAKCTLIAERQRVMAAQVALRR. The tract at residues 201–316 is disordered; that stretch reads LQAGRPGSPL…GGSGPRQRTP (116 aa). Positions 314-349 constitute a DMA domain; sequence RTPLDILTRVFPGHRRGVLELVLQGCGGDVVQAIEQ.

Belongs to the DMRT family. As to expression, expressed in testis.

The protein localises to the nucleus. In terms of biological role, may be involved in sexual development. The sequence is that of Doublesex- and mab-3-related transcription factor A2 (DMRTA2) from Homo sapiens (Human).